Here is a 369-residue protein sequence, read N- to C-terminus: Glutamate 5-kinase (369 aa).

Lys-9 contacts ATP. Residues Ser-49, Asp-136, and Asn-148 each contribute to the substrate site. Residues 168-169 (TD) and 210-216 (TGGMLTK) contribute to the ATP site. A PUA domain is found at 275–355 (QGEIYVDQGA…KGVVIHRDDW (81 aa)).

Belongs to the glutamate 5-kinase family.

Its subcellular location is the cytoplasm. The catalysed reaction is L-glutamate + ATP = L-glutamyl 5-phosphate + ADP. Its pathway is amino-acid biosynthesis; L-proline biosynthesis; L-glutamate 5-semialdehyde from L-glutamate: step 1/2. Functionally, catalyzes the transfer of a phosphate group to glutamate to form L-glutamate 5-phosphate. The sequence is that of Glutamate 5-kinase from Streptococcus gordonii (strain Challis / ATCC 35105 / BCRC 15272 / CH1 / DL1 / V288).